Consider the following 783-residue polypeptide: Cyclin-dependent kinase 11A (783 aa).

Residues 18–58 (QEKKRRKEQEEKAEIKRLKNSDDRDSKRDSLEEGELRDHCM) are compositionally biased toward basic and acidic residues. A disordered region spans residues 18–396 (QEKKRRKEQE…SALTEGDYVP (379 aa)). Phosphoserine is present on residues Ser47 and Ser72. Residues 95 to 125 (EKVHHRKDEKRKEKWKHARVKEREHERRKRH) are compositionally biased toward basic residues. Basic and acidic residues-rich tracts occupy residues 126–215 (REEQ…DKVK), 226–241 (PPRERFELGDGRKPGE), and 252–264 (QLKEEKMEERDLL). Ser271 is subject to Phosphoserine. Positions 279–290 (SAESSSAESGSG) are enriched in low complexity. 2 stretches are compositionally biased toward acidic residues: residues 291 to 352 (SEEE…EERE) and 371 to 380 (ESEEAEEEVG). One can recognise a Protein kinase domain in the interval 427 to 647 (QCLNRIEEGT…VFKELGTPSE (221 aa)). Residues 432 to 440 (IEEGTYGVV) and Lys455 each bind ATP. Residue Ser470 is modified to Phosphoserine; by CDK7. Thr476 bears the Phosphothreonine; by CDK7 mark. Asp550 serves as the catalytic Proton acceptor. Ser577 carries the post-translational modification Phosphoserine. A Phosphotyrosine modification is found at Tyr582. Phosphothreonine is present on residues Thr583 and Thr739. Residues 721–783 (SMFPTWPAKS…AAGPGFSLKF (63 aa)) are disordered. Ser740 bears the Phosphoserine mark.

This sequence belongs to the protein kinase superfamily. CMGC Ser/Thr protein kinase family. CDC2/CDKX subfamily. In terms of assembly, the cleaved p110 isoform, p110C, binds to the serine/threonine kinase PAK1. The p58 isoform but not the p110 isoform or p110C interacts with CCND3. The p110 isoforms are found in large molecular weight complexes containing CCNL1 and SFRS7. It depends on Mg(2+) as a cofactor. In terms of processing, during apoptosis, induced by Fas or tumor necrosis factor, specific CKD11 p110 isoforms are cleaved by caspases to produce a protein (p110C) that contains the C-terminal kinase domain of the CDK11 proteins. Expressed ubiquitously. Some evidence of isoform-specific tissue distribution.

It is found in the cytoplasm. Its subcellular location is the nucleus. It carries out the reaction L-seryl-[protein] + ATP = O-phospho-L-seryl-[protein] + ADP + H(+). The enzyme catalyses L-threonyl-[protein] + ATP = O-phospho-L-threonyl-[protein] + ADP + H(+). With respect to regulation, phosphorylation at Thr-436 or Tyr-437 inactivates the enzyme, while phosphorylation at Thr-583 activates it. Appears to play multiple roles in cell cycle progression, cytokinesis and apoptosis. The p110 isoforms have been suggested to be involved in pre-mRNA splicing, potentially by phosphorylating the splicing protein SFRS7. The p58 isoform may act as a negative regulator of normal cell cycle progression. The chain is Cyclin-dependent kinase 11A (CDK11A) from Homo sapiens (Human).